Consider the following 579-residue polypeptide: L-ascorbate oxidase (579 aa).

The first 30 residues, 1–30 (MLQMGKAREPNFLILFFFGLILAFGISSEG), serve as a signal peptide directing secretion. 2 Plastocyanin-like domains span residues 33–152 (IRHY…LIVD) and 164–330 (DGEI…NYLP). Cystine bridges form between Cys49-Cys231, Cys111-Cys568, and Cys210-Cys223. Cu cation-binding residues include His90 and His92. N-linked (GlcNAc...) asparagine glycosylation occurs at Asn122. His134 and His136 together coordinate Cu cation. Residues Asn355 and Asn470 are each glycosylated (N-linked (GlcNAc...) asparagine). In terms of domain architecture, Plastocyanin-like 3 spans 374 to 553 (NRRIFLLNTQ…HMGMGVVFAE (180 aa)). Residues His475, His478, His480, His536, Cys537, His538, His542, and Met547 each coordinate Cu cation.

This sequence belongs to the multicopper oxidase family. Dimer. Cu cation is required as a cofactor.

The protein localises to the secreted. The enzyme catalyses 4 L-ascorbate + O2 = 4 monodehydro-L-ascorbate radical + 2 H2O. Its function is as follows. May be involved in a redox system involving ascorbic acid. This chain is L-ascorbate oxidase (AAO), found in Cucurbita maxima (Pumpkin).